The primary structure comprises 313 residues: MGCRCCKMIQSYLFDPVQVPSPGFVNEVNNCKLEEDDTVRLKGTQNSEVEVPRNALHDGSLSNSESRGSTTGLPHQGPLPQEDSEERPCVEKQGIVNGISPTATLQSVRSSRLHQVDNSSWASSPWVATIDSAHLAQPFLEGEDYRKQSCLLPTLEGTQMVGHGDCRAPAEALAVADHIPYIPAPDYPQLWSPTVDNADPEEKDCLFENHSEVEPLPGIQPRVSQLGLNVPFSLQRSWDSLNEAGTTEVLSDYFKEEGPTHPTPAADSGSEREDPHTYNGDREGVVVDEDAEVAEALAALEAATAGEDADDAD.

The disordered stretch occupies residues 40-89 (RLKGTQNSEVEVPRNALHDGSLSNSESRGSTTGLPHQGPLPQEDSEERPC). Serine 60 and serine 64 each carry phosphoserine. Positions 60 to 73 (SLSNSESRGSTTGL) are enriched in polar residues. A Phosphothreonine modification is found at threonine 104. A phosphoserine mark is found at serine 107, serine 237, and serine 240. Positions 253-286 (YFKEEGPTHPTPAADSGSEREDPHTYNGDREGVV) are disordered. Residues 269–285 (GSEREDPHTYNGDREGV) show a composition bias toward basic and acidic residues.

As to quaternary structure, interacts with KEAP1; this interaction prevents the ubiquitination of KEAP1 by TRIM25, thus protecting KEAP1 from degradation. Found in association with PDCD10 and members of the STE20 kinases, such as STK24, STK25 and STK26.

The protein localises to the cell membrane. Acts as a tumor suppressor. Acts as a tumor suppressor for colorectal cancer cell proliferation by targeting KEAP1/USP17/ELK1/CDK6 axis. This Mus musculus (Mouse) protein is PDCD10 and GCKIII kinases-associated protein 1.